The primary structure comprises 927 residues: Isoleucine--tRNA ligase (927 aa).

Residues 57-67 (PYANGHIHIGH) carry the 'HIGH' region motif. E561 provides a ligand contact to L-isoleucyl-5'-AMP. Positions 602–606 (KMSKS) match the 'KMSKS' region motif. K605 serves as a coordination point for ATP. Residues C897, C900, C917, and C920 each coordinate Zn(2+).

Belongs to the class-I aminoacyl-tRNA synthetase family. IleS type 1 subfamily. In terms of assembly, monomer. Zn(2+) serves as cofactor.

Its subcellular location is the cytoplasm. The enzyme catalyses tRNA(Ile) + L-isoleucine + ATP = L-isoleucyl-tRNA(Ile) + AMP + diphosphate. Functionally, catalyzes the attachment of isoleucine to tRNA(Ile). As IleRS can inadvertently accommodate and process structurally similar amino acids such as valine, to avoid such errors it has two additional distinct tRNA(Ile)-dependent editing activities. One activity is designated as 'pretransfer' editing and involves the hydrolysis of activated Val-AMP. The other activity is designated 'posttransfer' editing and involves deacylation of mischarged Val-tRNA(Ile). The sequence is that of Isoleucine--tRNA ligase from Syntrophotalea carbinolica (strain DSM 2380 / NBRC 103641 / GraBd1) (Pelobacter carbinolicus).